A 421-amino-acid chain; its full sequence is MTESVLDYMSRLGRDARAASRLLARAATAQKNRALLAAADALDAARAELSHANEQDLAAGRANGLEPAMLDRLALTPARIDDMIEGLRQVATLPDPIGEIRDMRYVPSGIQIGKMRVPLGVVGIIYESRPNVTIDAASLCLKSGNATILRGGSEAIHSNQAIARCIQQGLAEAGLPAAAVQVVETTDRAAVGALISMPEYVDVIVPRGGKGLIERISREARVPVIKHLDGICHVYIDVAADLDKAIRVADNAKTQRYAPCNTMETLLVHAGIAERVLPPLAAIYREKGVELRGDAATRALLGADVLEATEEDWRTEYNAPILSIRIVDGLGAAIEHINTYGSQHTDAIITENFSDARRFLAEVDSASVMVNASTRFADGFEYGLGAEIGISTDKLHARGPVGLEGLTSEKYVVFGDGHVRT.

It belongs to the gamma-glutamyl phosphate reductase family.

The protein localises to the cytoplasm. It carries out the reaction L-glutamate 5-semialdehyde + phosphate + NADP(+) = L-glutamyl 5-phosphate + NADPH + H(+). Its pathway is amino-acid biosynthesis; L-proline biosynthesis; L-glutamate 5-semialdehyde from L-glutamate: step 2/2. Functionally, catalyzes the NADPH-dependent reduction of L-glutamate 5-phosphate into L-glutamate 5-semialdehyde and phosphate. The product spontaneously undergoes cyclization to form 1-pyrroline-5-carboxylate. The sequence is that of Gamma-glutamyl phosphate reductase from Pseudomonas paraeruginosa (strain DSM 24068 / PA7) (Pseudomonas aeruginosa (strain PA7)).